Here is a 58-residue protein sequence, read N- to C-terminus: MAVPKKRTPKSKTRSRKSQWMRKALKQLQKARTLAGRLAARQDQMQPTQMQPTQMQPN.

Disordered stretches follow at residues 1–21 (MAVP…SQWM) and 34–58 (LAGR…MQPN). Positions 44–58 (QMQPTQMQPTQMQPN) are enriched in low complexity.

The protein belongs to the bacterial ribosomal protein bL32 family.

The protein localises to the plastid. Its subcellular location is the chloroplast. The sequence is that of Large ribosomal subunit protein bL32c from Cyanidioschyzon merolae (strain NIES-3377 / 10D) (Unicellular red alga).